We begin with the raw amino-acid sequence, 221 residues long: F-box protein At1g55000 (221 aa).

The 40-residue stretch at 7–46 (DTLIIIFQKLTVADLARASCVCKVWNSVATEDDLVVSAFT) folds into the F-box domain. The LysM domain occupies 74–118 (ISHRICRGDSVTSLAVKYAVQVMDIKRLNNMMSDHGIYSRDRLLI).

Part of a SCF (ASK-cullin-F-box) protein ligase complex. Interacts with SKP1A/ASK1, SKP1B/ASK2, ASK4, ASK11 and ASK13.

The protein operates within protein modification; protein ubiquitination. Its function is as follows. Component of SCF(ASK-cullin-F-box) E3 ubiquitin ligase complexes, which may mediate the ubiquitination and subsequent proteasomal degradation of target proteins. The sequence is that of F-box protein At1g55000 from Arabidopsis thaliana (Mouse-ear cress).